The sequence spans 412 residues: Subtilisin-like protease 6 (412 aa).

Residues 1-20 (MGFITKAIPIVLAALSTVNG) form the signal peptide. The propeptide occupies 21 to 127 (ARILEAGPHA…VRATTNGTNL (107 aa)). In terms of domain architecture, Inhibitor I9 spans 36 to 120 (KYIVVMKKDV…FIEPDFVVRA (85 aa)). N123 and N126 each carry an N-linked (GlcNAc...) asparagine glycan. The 278-residue stretch at 135 to 412 (SWGLARVSTR…SKLIYNGSGK (278 aa)) folds into the Peptidase S8 domain. Active-site charge relay system residues include D167 and H198. N252, N264, and N325 each carry an N-linked (GlcNAc...) asparagine glycan. The active-site Charge relay system is S358. N408 carries N-linked (GlcNAc...) asparagine glycosylation.

The protein belongs to the peptidase S8 family.

It is found in the secreted. Functionally, secreted subtilisin-like serine protease with keratinolytic activity that contributes to pathogenicity. This chain is Subtilisin-like protease 6 (SUB6), found in Trichophyton verrucosum (Cattle ringworm fungus).